A 485-amino-acid chain; its full sequence is NADH-quinone oxidoreductase subunit N (485 aa).

Helical transmembrane passes span 8–28 (LIAL…MLSI), 35–55 (FLNA…LWFV), 71–91 (GFAM…CTFA), 105–125 (FYLL…ANHL), 127–147 (ALFL…GYAF), 159–179 (YTIL…LVYA), 203–223 (LLAG…LVPF), 235–255 (PAPV…GVVM), 271–291 (VVLG…ALSQ), 297–317 (LLGY…IALQ), 326–346 (VGVY…VVSL), 373–393 (AAVM…LGFI), 408–430 (WWLV…RVAV), and 455–475 (IVVL…QPLI).

It belongs to the complex I subunit 2 family. In terms of assembly, NDH-1 is composed of 13 different subunits. Subunits NuoA, H, J, K, L, M, N constitute the membrane sector of the complex.

The protein localises to the cell inner membrane. It catalyses the reaction a quinone + NADH + 5 H(+)(in) = a quinol + NAD(+) + 4 H(+)(out). Its function is as follows. NDH-1 shuttles electrons from NADH, via FMN and iron-sulfur (Fe-S) centers, to quinones in the respiratory chain. The immediate electron acceptor for the enzyme in this species is believed to be ubiquinone. Couples the redox reaction to proton translocation (for every two electrons transferred, four hydrogen ions are translocated across the cytoplasmic membrane), and thus conserves the redox energy in a proton gradient. In Salmonella typhimurium (strain LT2 / SGSC1412 / ATCC 700720), this protein is NADH-quinone oxidoreductase subunit N.